A 197-amino-acid chain; its full sequence is Phosphoheptose isomerase (197 aa).

Positions 36-197 constitute an SIS domain; it reads LFAALANNGR…IDALLLGDTE (162 aa). 51 to 53 serves as a coordination point for substrate; the sequence is NGG. Zn(2+) contacts are provided by His60 and Glu64. Substrate is bound by residues Glu64, 93–94, 119–121, Ser124, and Gln174; these read ND and STS. 2 residues coordinate Zn(2+): Gln174 and His182.

This sequence belongs to the SIS family. GmhA subfamily. Homotetramer. Zn(2+) is required as a cofactor.

Its subcellular location is the cytoplasm. The enzyme catalyses 2 D-sedoheptulose 7-phosphate = D-glycero-alpha-D-manno-heptose 7-phosphate + D-glycero-beta-D-manno-heptose 7-phosphate. It participates in carbohydrate biosynthesis; D-glycero-D-manno-heptose 7-phosphate biosynthesis; D-glycero-alpha-D-manno-heptose 7-phosphate and D-glycero-beta-D-manno-heptose 7-phosphate from sedoheptulose 7-phosphate: step 1/1. In terms of biological role, catalyzes the isomerization of sedoheptulose 7-phosphate in D-glycero-D-manno-heptose 7-phosphate. This is Phosphoheptose isomerase from Bordetella avium (strain 197N).